The primary structure comprises 239 residues: Superoxide dismutase 1 copper chaperone (239 aa).

Residues 7 to 70 form the HMA domain; the sequence is FYEATYAVPM…ALRDCGRDAI (64 aa). Residues C18 and C21 each coordinate Cu cation. Residues C28 and C65 are joined by a disulfide bond. Zn(2+) is bound at residue D163. Cu cation contacts are provided by C219 and C221.

It belongs to the CCS1 family. Cu(2+) serves as cofactor.

Its subcellular location is the cytoplasm. Functionally, copper chaperone for superoxide dismutase 1 (SOD1). Binds copper ions and delivers them specifically to SOD1. The chain is Superoxide dismutase 1 copper chaperone (CCS1) from Candida glabrata (strain ATCC 2001 / BCRC 20586 / JCM 3761 / NBRC 0622 / NRRL Y-65 / CBS 138) (Yeast).